The following is a 229-amino-acid chain: Small ribosomal subunit protein mS23 (229 aa).

This sequence belongs to the mitochondrion-specific ribosomal protein mS23 family. Component of the mitochondrial small ribosomal subunit.

It localises to the mitochondrion. This is Small ribosomal subunit protein mS23 (RSM25) from Yarrowia lipolytica (strain CLIB 122 / E 150) (Yeast).